Reading from the N-terminus, the 160-residue chain is Cyclic pyranopterin monophosphate synthase (160 aa).

Substrate contacts are provided by residues 77 to 79 (MCH) and 114 to 115 (ME). Aspartate 129 is an active-site residue.

It belongs to the MoaC family. Homohexamer; trimer of dimers.

It carries out the reaction (8S)-3',8-cyclo-7,8-dihydroguanosine 5'-triphosphate = cyclic pyranopterin phosphate + diphosphate. The protein operates within cofactor biosynthesis; molybdopterin biosynthesis. Functionally, catalyzes the conversion of (8S)-3',8-cyclo-7,8-dihydroguanosine 5'-triphosphate to cyclic pyranopterin monophosphate (cPMP). The protein is Cyclic pyranopterin monophosphate synthase of Listeria monocytogenes serotype 4b (strain F2365).